We begin with the raw amino-acid sequence, 358 residues long: Core-capsid bridging protein (358 aa).

The segment at 296 to 331 (PSITPTPGYRGTTFKPSRTRSTRRRRSVRRRSRRTA) is disordered. Residues 312–329 (SRTRSTRRRRSVRRRSRR) show a composition bias toward basic residues.

Belongs to the adenoviridae core-capsid bridging protein family. Monomer. Homodimer. Exists in equilibrium between monomers and dimers in solution. Interacts with the histone-like nucleoprotein; this interactions bridge the virus core to the capsid. Interacts with core protein X; this interactions bridge the virus core to the capsid. Interacts with the endosome lysis protein VI; this interactions bridge the virus core to the capsid. Interacts with the peripentonal hexons. Interacts with host NPM1; this interaction might play a role in virus assembly.

The protein localises to the virion. It localises to the host nucleus. Its subcellular location is the host nucleolus. In terms of biological role, associates loosely with the viral DNA to form an outer shell around the nucleoprotein-DNA complex and links it with the capsid by binding the endosome lysis protein. Dissociates from the viral genome during entry. Might be involved in nuclear capsid assembly of the viral particles through its association with NPM1/nucleophosmin. This chain is Core-capsid bridging protein, found in Human adenovirus F serotype 40 (HAdV-40).